A 663-amino-acid polypeptide reads, in one-letter code: MDRKQLANAIRALSMDGVQKANSGHPGAPMGMADIAEVLWRGHLNHNPSNPEWADRDRFVLSNGHGSMLIYSLLHLSGYELSIDDLKNFRQLHSKTPGHPEYGYAPGIETTTGPLGQGITNAVGMAMAEKALAAQFNKEGHDIVDHFTYVFMGDGCLMEGISHEACSLAGTLGLGKLIAFWDDNGISIDGHVEGWFSDDTPKRFEAYGWHVIPAVDGHNAEAINAAIEAAKADPRPTLICTKTIIGFGSPNKSGSHDCHGAPLGAEEIAATRKELGWEHGPFEIPQEVYAEWSAKEAGAAKEAAWNEKFAAYEAAYPELAAEFKRRVNGELPAQWEEKANQIIADLQANPANIASRKASQNALEAFGKMLPEFMGGSADLAPSNLTMWSGSKSLEASDFSGNYIHYGVREFGMTAIMNGIALHGGFVPYGATFLMFMEYARNAMRMAALMKVQNIQVYTHDSIGLGEDGPTHQPVEQIASLRLTPNMSTWRPCDQVESAVAWKLAIERKDGPSALIFSRQNLAQQPRSAEQVADIAKGGYILKDSDGKPELILIATGSEVELAVKAAEQLTAEGKKVRVVSMPATDTFDKQDAAYREAVLPSDVTARIAIEAGIADFWYKYVGFDGRIIGMTTFGESAPADQLFEMFGFTVENVVNTAKELLA.

Position 25 (His25) interacts with substrate. Thiamine diphosphate-binding positions include His65 and Gly113–Leu115. Asp154 contacts Mg(2+). Residues Gly155 and Asn184 each contribute to the thiamine diphosphate site. Mg(2+) is bound by residues Asn184 and Ile186. 3 residues coordinate substrate: His259, Arg356, and Ser383. Residue His259 coordinates thiamine diphosphate. Glu410 serves as the catalytic Proton donor. Residue Phe436 participates in thiamine diphosphate binding. 3 residues coordinate substrate: His460, Asp468, and Arg519.

Belongs to the transketolase family. In terms of assembly, homodimer. The cofactor is Mg(2+). It depends on Ca(2+) as a cofactor. Mn(2+) is required as a cofactor. Requires Co(2+) as cofactor. Thiamine diphosphate serves as cofactor.

The enzyme catalyses D-sedoheptulose 7-phosphate + D-glyceraldehyde 3-phosphate = aldehydo-D-ribose 5-phosphate + D-xylulose 5-phosphate. Functionally, catalyzes the transfer of a two-carbon ketol group from a ketose donor to an aldose acceptor, via a covalent intermediate with the cofactor thiamine pyrophosphate. The chain is Transketolase 2 (tkt2) from Vibrio vulnificus (strain CMCP6).